A 30-amino-acid polypeptide reads, in one-letter code: Conotoxin Bt12.1 (30 aa).

In terms of processing, contains 3 disulfide bonds. Expressed by the venom duct.

It is found in the secreted. The sequence is that of Conotoxin Bt12.1 from Conus betulinus (Beech cone).